The sequence spans 70 residues: Small ribosomal subunit protein bS21 (70 aa).

It belongs to the bacterial ribosomal protein bS21 family.

This Campylobacter fetus subsp. fetus (strain 82-40) protein is Small ribosomal subunit protein bS21.